A 477-amino-acid chain; its full sequence is 3-isopropylmalate dehydratase large subunit (477 aa).

[4Fe-4S] cluster-binding residues include cysteine 347, cysteine 407, and cysteine 410. The tract at residues 418–442 (LAPGERSASTSNRNFEGRQGKGGRT) is disordered.

It belongs to the aconitase/IPM isomerase family. LeuC type 1 subfamily. In terms of assembly, heterodimer of LeuC and LeuD. It depends on [4Fe-4S] cluster as a cofactor.

The catalysed reaction is (2R,3S)-3-isopropylmalate = (2S)-2-isopropylmalate. Its pathway is amino-acid biosynthesis; L-leucine biosynthesis; L-leucine from 3-methyl-2-oxobutanoate: step 2/4. Catalyzes the isomerization between 2-isopropylmalate and 3-isopropylmalate, via the formation of 2-isopropylmaleate. This chain is 3-isopropylmalate dehydratase large subunit, found in Streptomyces avermitilis (strain ATCC 31267 / DSM 46492 / JCM 5070 / NBRC 14893 / NCIMB 12804 / NRRL 8165 / MA-4680).